The chain runs to 352 residues: Mannonate dehydratase (352 aa).

The protein belongs to the mannonate dehydratase family. It depends on Fe(2+) as a cofactor. The cofactor is Mn(2+).

It catalyses the reaction D-mannonate = 2-dehydro-3-deoxy-D-gluconate + H2O. The protein operates within carbohydrate metabolism; pentose and glucuronate interconversion. In terms of biological role, catalyzes the dehydration of D-mannonate. The polypeptide is Mannonate dehydratase (Paraburkholderia phytofirmans (strain DSM 17436 / LMG 22146 / PsJN) (Burkholderia phytofirmans)).